The chain runs to 160 residues: Leptin (160 aa).

Residues 1 to 17 (MDYTLALALSLLQLSMC) form the signal peptide. A disulfide bridge connects residues cysteine 109 and cysteine 160.

Belongs to the leptin family.

The protein resides in the secreted. Its function is as follows. May function as part of a signaling pathway that acts to regulate the size of the body fat depot. This is Leptin (lep) from Tetraodon nigroviridis (Spotted green pufferfish).